A 116-amino-acid chain; its full sequence is Fluoride-specific ion channel FluC 1 (116 aa).

The next 4 membrane-spanning stretches (helical) occupy residues 1 to 21, 31 to 51, 58 to 78, and 92 to 112; these read MGKL…RYTV, IPAG…FLTF, MVYL…TFAY, and FFLN…IAYL. Positions 68 and 71 each coordinate Na(+).

It belongs to the fluoride channel Fluc/FEX (TC 1.A.43) family.

It is found in the cell membrane. The catalysed reaction is fluoride(in) = fluoride(out). Na(+) is not transported, but it plays an essential structural role and its presence is essential for fluoride channel function. Fluoride-specific ion channel. Important for reducing fluoride concentration in the cell, thus reducing its toxicity. In Methanosarcina barkeri (strain Fusaro / DSM 804), this protein is Fluoride-specific ion channel FluC 1.